A 224-amino-acid polypeptide reads, in one-letter code: IAP-like protein p27 (224 aa).

The stretch at valine 29 to methionine 92 is one BIR repeat. The Zn(2+) site is built by cysteine 62, cysteine 65, histidine 82, and cysteine 89.

Its function is as follows. Not essential for growth or virulence. Does not have antiapoptotic function. In Ornithodoros (relapsing fever ticks), this protein is IAP-like protein p27 (p27).